We begin with the raw amino-acid sequence, 213 residues long: Uridine kinase (213 aa).

15–22 (GASASGKS) serves as a coordination point for ATP.

The protein belongs to the uridine kinase family.

It is found in the cytoplasm. The catalysed reaction is uridine + ATP = UMP + ADP + H(+). The enzyme catalyses cytidine + ATP = CMP + ADP + H(+). Its pathway is pyrimidine metabolism; CTP biosynthesis via salvage pathway; CTP from cytidine: step 1/3. It participates in pyrimidine metabolism; UMP biosynthesis via salvage pathway; UMP from uridine: step 1/1. The sequence is that of Uridine kinase from Pectobacterium carotovorum subsp. carotovorum (strain PC1).